Reading from the N-terminus, the 442-residue chain is Adenylosuccinate synthetase (442 aa).

GTP contacts are provided by residues 25–31, 53–55, and lysine 62; these read GDEGKGK and GHT. Residue aspartate 26 is the Proton acceptor of the active site. 2 residues coordinate Mg(2+): aspartate 26 and glycine 53. Residues 26–29 and 51–54 contribute to the IMP site; these read DEGK and NAGH. The Proton donor role is filled by histidine 54. IMP contacts are provided by threonine 141, arginine 155, asparagine 232, and threonine 247. Threonine 307 is a GTP binding site. Residue 307–313 coordinates substrate; the sequence is TTTKRPR. Arginine 311 contributes to the IMP binding site. Residues arginine 313, 339-341, and 425-427 contribute to the GTP site; these read KLD and GVG.

The protein belongs to the adenylosuccinate synthetase family. Homodimer. Mg(2+) is required as a cofactor.

It localises to the cytoplasm. The catalysed reaction is IMP + L-aspartate + GTP = N(6)-(1,2-dicarboxyethyl)-AMP + GDP + phosphate + 2 H(+). It participates in purine metabolism; AMP biosynthesis via de novo pathway; AMP from IMP: step 1/2. With respect to regulation, inhibited by hadacidin. Activated by fructose 1,6-bisphosphate. Functionally, plays an important role in the salvage pathway for purine nucleotide biosynthesis. Catalyzes the first committed step in the biosynthesis of AMP from IMP. The sequence is that of Adenylosuccinate synthetase (Adss) from Plasmodium falciparum.